The primary structure comprises 54 residues: uncharacterized protein (54 aa).

This is an uncharacterized protein from Saccharolobus solfataricus (Sulfolobus solfataricus).